The primary structure comprises 88 residues: Phosphoribosyl-ATP pyrophosphatase (88 aa).

It belongs to the PRA-PH family.

The protein localises to the cytoplasm. The catalysed reaction is 1-(5-phospho-beta-D-ribosyl)-ATP + H2O = 1-(5-phospho-beta-D-ribosyl)-5'-AMP + diphosphate + H(+). Its pathway is amino-acid biosynthesis; L-histidine biosynthesis; L-histidine from 5-phospho-alpha-D-ribose 1-diphosphate: step 2/9. The chain is Phosphoribosyl-ATP pyrophosphatase from Cutibacterium acnes (strain DSM 16379 / KPA171202) (Propionibacterium acnes).